Reading from the N-terminus, the 324-residue chain is Mitochondrial thiamine pyrophosphate carrier 1 (324 aa).

Solcar repeat units lie at residues 12–110 (GNRI…ISSA), 119–205 (PQPV…LRSP), and 212–307 (PFGT…VLGL). 6 consecutive transmembrane segments (helical) span residues 15–35 (IQVV…VAPL), 79–99 (ITGL…YGGI), 125–145 (FISG…LDLL), 182–202 (TAAI…YEAL), 218–238 (AGAG…LDLV), and 282–299 (GLTV…VTMW).

It belongs to the mitochondrial carrier (TC 2.A.29) family.

Its subcellular location is the mitochondrion inner membrane. In terms of biological role, mitochondrial transporter that mediates uptake of thiamine pyrophosphate (ThPP) into mitochondria. This chain is Mitochondrial thiamine pyrophosphate carrier 1 (TPC1), found in Ajellomyces capsulatus (strain NAm1 / WU24) (Darling's disease fungus).